Consider the following 115-residue polypeptide: Delta-hexatoxin-Hi1a (115 aa).

The first 18 residues, 1–18, serve as a signal peptide directing secretion; the sequence is MKVIATLYGLLFLTVVLG. A propeptide spanning residues 19-73 is cleaved from the precursor; it reads DITEGNENDLVENFREELSEADIPLLKKLEAIEDALLEKDFLPYEEEDRNARPKR. 4 disulfide bridges follow: Cys74–Cys88, Cys81–Cys93, Cys87–Cys104, and Cys89–Cys115.

The protein belongs to the neurotoxin 06 (delta-actx) family. As to expression, expressed by the venom gland.

It localises to the secreted. In terms of biological role, neurotoxin that slows inactivation of voltage-gated sodium channels (Nav). In vivo, is lethal to both vertebrates and insects. This Hadronyche infensa (Fraser island funnel-web spider) protein is Delta-hexatoxin-Hi1a.